The following is a 418-amino-acid chain: MSGASLLKETGPREVFCGLTSIVWLHRRMPDAFFLVVGSRTCAHLIQSAAGVMIFAEPRFGTAILEERDLAGLADAHEELDRVVKNLLTRRPEIRTLFLVGSCPSEVIKIDLARAAERLNSQFNGKVTILNYSGSGIETTFTQGEDGALKAFVPLMPSSDKKQLLLVGTLANAVEDRLITIFKRLGIENVDSFPPRQSTELPSIGPETKVLLTQPYLTDTARVLKDRGAEILPAPFPLGVEGSRLWIEAAAKSFNVDQSLVTSTLEPLILRARKALKPYIEKLTGKKLFLLPESQLEIPLARFLHMECGMELLEIGTPYLNRDMMKPELDLLPDKTRIVEGQHVEKQLDRVRKNQPDLVVCGMGLANPLEAEGFSTKWSIEMVFSPIHGIDQASDLAELFSRPLHRHDLLNTKQLTST.

Residues cysteine 17, cysteine 42, and cysteine 103 each coordinate [4Fe-4S] cluster.

Belongs to the BchN/ChlN family. As to quaternary structure, protochlorophyllide reductase is composed of three subunits; ChlL, ChlN and ChlB. Forms a heterotetramer of two ChlB and two ChlN subunits. [4Fe-4S] cluster serves as cofactor.

The catalysed reaction is chlorophyllide a + oxidized 2[4Fe-4S]-[ferredoxin] + 2 ADP + 2 phosphate = protochlorophyllide a + reduced 2[4Fe-4S]-[ferredoxin] + 2 ATP + 2 H2O. It participates in porphyrin-containing compound metabolism; chlorophyll biosynthesis (light-independent). Functionally, component of the dark-operative protochlorophyllide reductase (DPOR) that uses Mg-ATP and reduced ferredoxin to reduce ring D of protochlorophyllide (Pchlide) to form chlorophyllide a (Chlide). This reaction is light-independent. The NB-protein (ChlN-ChlB) is the catalytic component of the complex. The polypeptide is Light-independent protochlorophyllide reductase subunit N (Prochlorococcus marinus (strain MIT 9211)).